A 693-amino-acid polypeptide reads, in one-letter code: Glycine--tRNA ligase beta subunit (693 aa).

The protein belongs to the class-II aminoacyl-tRNA synthetase family. As to quaternary structure, tetramer of two alpha and two beta subunits.

The protein resides in the cytoplasm. The catalysed reaction is tRNA(Gly) + glycine + ATP = glycyl-tRNA(Gly) + AMP + diphosphate. In Vibrio vulnificus (strain CMCP6), this protein is Glycine--tRNA ligase beta subunit.